Here is a 421-residue protein sequence, read N- to C-terminus: Putative zinc finger protein R05D3.3 (421 aa).

2 C2H2-type zinc fingers span residues Val-207–His-228 and Tyr-234–His-257. The segment at Gly-400–Val-421 is disordered.

The protein localises to the nucleus. This chain is Putative zinc finger protein R05D3.3, found in Caenorhabditis elegans.